Consider the following 1173-residue polypeptide: MEGSLLVASSTSNNETANTASTDGATRRLSFAKIHEPLDVPNLLALQTDSFDWLVGNERWQARVAKAVEEGDLSVATTSGLADIFEEISPIEDFQGTMSLSFSEPEFADPKYTMAECKDRDATYSAPLYVKAEFMNNNTGEIKQQTVFMGDFPLMTEKGTFVVNGTERVVVSQLVRSPGAYFERTADKTSDKDIFTAKIIPSRGAWFELEIDKRDQVGVRLDRKRKQSVTVLLKALGWTEGQILEEFGQYDSMRATLEKDATETREDALLDIYRKLRPGEPPTVEAAQSLLDNLYFNAKRYDLAKVGRYKINRKLGIDRSLGDKEASVLHVEDIVAMIKFLVALHAGEKTLMGKRDGEDHELRVDVDDIDHFGNRRIRAVGELIENQVRTGLSRMERVVRERMTTQDVEAITPQTLINIRPVVAAIKEFFGTSQLSQFMDQNNPLSGLTHKRRLSALGPGGLSRDRAGMEVRDVHPSHYGRMCPIETPEGPNIGLIGSLASYGRINPFGFIETPYRLVSEGVVSDEVQYLTADDEAEVLIAQANAPLDADKKFSEETVLVRARGGGGEPVLVPAADVQFMDVSPRQMVSVATALIPFLEHDDANRALMGANMQRQAVPLVRSEAPFVGTGMERAAAVDAGDVVIAKKAGVVTEVSAELVVMINDDGTETNYRINKFARSNQGNCYNHRVLVNEGQRLEVGGIIADGPATDQGELALGKNLLVAFMSWEGHNFEDAIILSQRIVAEDVLSSIHIEEHEIDARDTKLGAEEITRDIPNVSEEVLAGLDERGIIHIGAEVEAGDILVGKVTPKGETELTPEERLLRAIFGEKSREVRDTSLKVPHGESGTVIGVRVFDRDNDDELPPGVNQLVRVYVAAKRKITDGDKLAGRHGNKGVISKILPIEDMPFLADGTPVDIVLNPLGVPGRMNVGQVLETHLGWVAKTGWKIEGEPEWVKNLPNLPRETGQTTVATPVFDGAREEEITGLLDSTNVTRDGDRLIDSSGKTRLFDGRSGEPFPDPISVGYMYILKLHHLVDDKIHARSTGPYSMITQQPLGGKAQFGGQRFGEMEVWALEAYGAAYTLQELLTIKSDDIHGRVKVYEAIVKGENIPEPGVPESFKVLIKEMQSLCLNVEVLSTDGTTIEMRDSDDAVFTAAEELGIDLSRAEPSSVEEV.

Residues 1-23 (MEGSLLVASSTSNNETANTASTD) form a disordered region. Low complexity predominate over residues 8 to 22 (ASSTSNNETANTAST).

Belongs to the RNA polymerase beta chain family. As to quaternary structure, the RNAP catalytic core consists of 2 alpha, 1 beta, 1 beta' and 1 omega subunit. When a sigma factor is associated with the core the holoenzyme is formed, which can initiate transcription.

It carries out the reaction RNA(n) + a ribonucleoside 5'-triphosphate = RNA(n+1) + diphosphate. Its function is as follows. DNA-dependent RNA polymerase catalyzes the transcription of DNA into RNA using the four ribonucleoside triphosphates as substrates. This chain is DNA-directed RNA polymerase subunit beta, found in Paenarthrobacter aurescens (strain TC1).